A 533-amino-acid polypeptide reads, in one-letter code: Putative adhesin domain-containing protein LiaX (533 aa).

Positions 1–277 (MKERERVLEL…EFNYPNPQAS (277 aa)) are binds the antibiotic daptomycin (DAP) and the antimicrobial peptide human LL-37, under physiologically relevant concentrations. Protects the OG1RF and S613 strains from LL-37-mediated killing in a concentration-dependent manner. Positions 63–89 (NALEKGESEGPTVDSFEENTQDSAEKD) are disordered. Residues 83–186 (QDSAEKDREN…EEELKNIRKE (104 aa)) adopt a coiled-coil conformation. The tract at residues 279–526 (IDVKVANGTV…INASTTTGSI (248 aa)) is putative adhesin region. The tract at residues 289–526 (VFKTWDQEDV…INASTTTGSI (238 aa)) is involved in cell membrane remodeling.

May undergo proteolytic cleavage, allowing release of the N-terminal region into the extracellular environment.

Its subcellular location is the secreted. It localises to the cell wall. The protein localises to the cell membrane. Involved in cell membrane remodeling, perhaps acting by negative modulation of the liaFSR and liaXYZ gene clusters, thereby regulating content and localization of anionic phospholipids. Binds to the antibiotic daptomycin (DAP) and to cationic antimicrobial peptides, such as human LL-37, perhaps functioning as a sensor that activates the cell envelope stress response. In Enterococcus faecalis (strain ATCC 700802 / V583), this protein is Putative adhesin domain-containing protein LiaX.